The sequence spans 193 residues: Small ribosomal subunit protein eS1 (193 aa).

This sequence belongs to the eukaryotic ribosomal protein eS1 family.

This is Small ribosomal subunit protein eS1 from Methanobrevibacter smithii (strain ATCC 35061 / DSM 861 / OCM 144 / PS).